Consider the following 156-residue polypeptide: Ribosomal RNA large subunit methyltransferase H (156 aa).

Residues L73, G104, and 123-128 (LSDLTL) contribute to the S-adenosyl-L-methionine site.

This sequence belongs to the RNA methyltransferase RlmH family. Homodimer.

The protein resides in the cytoplasm. It carries out the reaction pseudouridine(1915) in 23S rRNA + S-adenosyl-L-methionine = N(3)-methylpseudouridine(1915) in 23S rRNA + S-adenosyl-L-homocysteine + H(+). In terms of biological role, specifically methylates the pseudouridine at position 1915 (m3Psi1915) in 23S rRNA. The chain is Ribosomal RNA large subunit methyltransferase H from Leptothrix cholodnii (strain ATCC 51168 / LMG 8142 / SP-6) (Leptothrix discophora (strain SP-6)).